Here is a 570-residue protein sequence, read N- to C-terminus: Chaperonin GroEL 1 (570 aa).

ATP-binding positions include 42–45 (TLGP), Lys-63, 99–103 (DGTTT), Gly-427, and Asp-507. The segment at 537–570 (EDEDDDDGGGGGGGGMPAGGAGGMGGMGGMGGMM) is disordered. Residues 545-570 (GGGGGGGMPAGGAGGMGGMGGMGGMM) are compositionally biased toward gly residues.

The protein belongs to the chaperonin (HSP60) family. In terms of assembly, forms a cylinder of 14 subunits composed of two heptameric rings stacked back-to-back. Interacts with the co-chaperonin GroES.

It localises to the cytoplasm. The enzyme catalyses ATP + H2O + a folded polypeptide = ADP + phosphate + an unfolded polypeptide.. Functionally, together with its co-chaperonin GroES, plays an essential role in assisting protein folding. The GroEL-GroES system forms a nano-cage that allows encapsulation of the non-native substrate proteins and provides a physical environment optimized to promote and accelerate protein folding. This chain is Chaperonin GroEL 1, found in Salinibacter ruber (strain DSM 13855 / M31).